Consider the following 230-residue polypeptide: Probable fimbrial chaperone SfmC (230 aa).

The first 23 residues, 1-23, serve as a signal peptide directing secretion; that stretch reads MMTKIKLLMLIIFYLIISASAHA.

Belongs to the periplasmic pilus chaperone family.

The protein resides in the periplasm. Functionally, part of the sfmACDHF fimbrial operon. Could contribute to adhesion to various surfaces in specific environmental niches. Increases adhesion to eukaryotic T24 bladder epithelial cells in the absence of fim genes. The chain is Probable fimbrial chaperone SfmC (sfmC) from Escherichia coli (strain K12).